The primary structure comprises 504 residues: Lysine--tRNA ligase (504 aa).

A 'HIGH' region motif is present at residues 23–31; that stretch reads PSGPIHIGN.

It belongs to the class-I aminoacyl-tRNA synthetase family.

The protein localises to the cytoplasm. It catalyses the reaction tRNA(Lys) + L-lysine + ATP = L-lysyl-tRNA(Lys) + AMP + diphosphate. The polypeptide is Lysine--tRNA ligase (Picrophilus torridus (strain ATCC 700027 / DSM 9790 / JCM 10055 / NBRC 100828 / KAW 2/3)).